The following is a 404-amino-acid chain: Cysteine desulfurase IscS (404 aa).

Pyridoxal 5'-phosphate-binding positions include 75-76 (AT), asparagine 155, glutamine 183, and 203-205 (SAH). Lysine 206 bears the N6-(pyridoxal phosphate)lysine mark. Threonine 243 serves as a coordination point for pyridoxal 5'-phosphate. The active-site Cysteine persulfide intermediate is cysteine 328. Cysteine 328 contacts [2Fe-2S] cluster.

The protein belongs to the class-V pyridoxal-phosphate-dependent aminotransferase family. NifS/IscS subfamily. As to quaternary structure, homodimer. Forms a heterotetramer with IscU, interacts with other sulfur acceptors. Requires pyridoxal 5'-phosphate as cofactor.

It localises to the cytoplasm. The catalysed reaction is (sulfur carrier)-H + L-cysteine = (sulfur carrier)-SH + L-alanine. It participates in cofactor biosynthesis; iron-sulfur cluster biosynthesis. Its function is as follows. Master enzyme that delivers sulfur to a number of partners involved in Fe-S cluster assembly, tRNA modification or cofactor biosynthesis. Catalyzes the removal of elemental sulfur atoms from cysteine to produce alanine. Functions as a sulfur delivery protein for Fe-S cluster synthesis onto IscU, an Fe-S scaffold assembly protein, as well as other S acceptor proteins. In Aeromonas hydrophila subsp. hydrophila (strain ATCC 7966 / DSM 30187 / BCRC 13018 / CCUG 14551 / JCM 1027 / KCTC 2358 / NCIMB 9240 / NCTC 8049), this protein is Cysteine desulfurase IscS.